Reading from the N-terminus, the 424-residue chain is MAALGDEVLDGYVFPACPPCSYRYPYPAATKGKGAAGGSWQQRGRGCLPASSPCSAGAASLSFPGCGRLTAAEYFDSYQRERLMALLAQVGPGLGPRARRAGSCDVAVQVSPRIDAAVQCSLGRRTLQRRARDPESPAGPGAEGTTGGGSFSQQPSRRGLEQGSPQNGAPRPMRFPRTVAVYSPLALRRLTAFLEGPGPAAGEQRSGASDGERGPPPARLQGPEEGEVWTKKAPRRPQSDDDGEAQAAVRASWEQPADGPELPPREAQEGEAAPRSALRSPGQPPSAGRARDGGDGREAAVAGEGPSPRSPELGKERLRFQFLEQKYGYYHCKDCNIRWESAYVWCVQGTNKVYFKQFCRTCQKSYNPYRVEDITCQSCKQTRCSCPVKLRHVDPKRPHRQDLCGRCKGKRLSCDSTFSFKYII.

Disordered regions lie at residues 125 to 175 and 196 to 313; these read RTLQ…PMRF and GPGP…SPEL. Positions 141-150 are enriched in gly residues; the sequence is GAEGTTGGGS. The span at 289–298 shows a compositional bias: basic and acidic residues; that stretch reads RARDGGDGRE. The segment at 326–409 adopts a 3CxxC-type zinc-finger fold; sequence KYGYYHCKDC…RQDLCGRCKG (84 aa).

This sequence belongs to the ZAR1 family. In terms of assembly, interacts with YBX2. Ubiquitinated and degradaded by the proteasome during oocyte meiotic maturation, leading to MARDO (mitochondria-associated ribonucleoprotein domain) membraneless compartment dissolution. Ovary and testis.

It is found in the cytoplasm. Its subcellular location is the cytoplasmic ribonucleoprotein granule. Its function is as follows. mRNA-binding protein that mediates formation of MARDO (mitochondria-associated ribonucleoprotein domain), a membraneless compartment that stores maternal mRNAs in oocytes. MARDO assembly around mitochondria is directed by an increase in mitochondrial membrane potential during oocyte growth. Promotes formation of MARDO phase-separated membraneless compartment by undergoing liquid-liquid phase separation upon binding to maternal mRNAs. Binds to the 3'-UTR of maternal mRNAs. Maternal mRNAs stored in the MARDO are translationally repressed. Essential for female fertility and oocyte-to-embryo transition by coordinating maternal mRNA storage, translation and degradation. The sequence is that of Zygote arrest protein 1 from Homo sapiens (Human).